We begin with the raw amino-acid sequence, 347 residues long: Mitochondrial glycine transporter (347 aa).

Solcar repeat units lie at residues 18-102, 138-222, and 247-331; these read SKPT…LRTA, LSHT…SKRS, and STAS…LIMW. 6 helical membrane-spanning segments follow: residues 24 to 49, 77 to 103, 144 to 169, 197 to 220, 251 to 277, and 306 to 324; these read FAAG…TRVQ, GTLP…RTAV, LITG…VRYE, GFGA…EQSK, INFI…KTRV, and GLGL…AWTV.

The protein belongs to the mitochondrial carrier (TC 2.A.29) family. SLC25A38 subfamily.

The protein localises to the mitochondrion inner membrane. It carries out the reaction glycine(in) = glycine(out). Its function is as follows. Mitochondrial glycine transporter that imports glycine into the mitochondrial matrix. Plays an important role in providing glycine for the first enzymatic step in heme biosynthesis, the condensation of glycine with succinyl-CoA to produce 5-aminolevulinate (ALA) in the mitochondrial matrix. The sequence is that of Mitochondrial glycine transporter from Coccidioides immitis (strain RS) (Valley fever fungus).